The following is a 488-amino-acid chain: Histone deacetylase 2 (488 aa).

A histone deacetylase region spans residues 9–322 (KKKVCYYYDG…WTYETAVALD (314 aa)). 2 residues coordinate 1D-myo-inositol 1,4,5,6-tetrakisphosphate: G28 and K32. K75 is modified (N6-acetyllysine; alternate). K75 is covalently cross-linked (Glycyl lysine isopeptide (Lys-Gly) (interchain with G-Cter in SUMO2); alternate). Residue H142 is part of the active site. Residues D175, D177, H179, F188, T191, V194, S198, and F199 each coordinate Ca(2+). Residues D177 and H179 each coordinate Zn(2+). N6-acetyllysine is present on K221. Y223 provides a ligand contact to Ca(2+). C262 carries the S-nitrosocysteine modification. D265 is a Zn(2+) binding site. R271 lines the 1D-myo-inositol 1,4,5,6-tetrakisphosphate pocket. S-nitrosocysteine is present on C274. The tract at residues 389–488 (AVHEDSGDED…GAKSEQLSNP (100 aa)) is disordered. Phosphoserine is present on residues S394, S407, S422, and S424. The span at 402–417 (PDKRISIRASDKRIAC) shows a compositional bias: basic and acidic residues. A compositionally biased stretch (acidic residues) spans 418–428 (DEEFSDSEDEG). Basic and acidic residues predominate over residues 429 to 481 (EGGRRNVADHKKGAKKARIEEDKKETEDKKTDVKEEDKSKDNSGEKTDPKGAK). Residues K439, K452, K458, K462, K478, and K481 each participate in a glycyl lysine isopeptide (Lys-Gly) (interchain with G-Cter in SUMO2) cross-link.

This sequence belongs to the histone deacetylase family. HD type 1 subfamily. Part of the core histone deacetylase (HDAC) complex composed of HDAC1, HDAC2, RBBP4 and RBBP7, the core complex associates with SIN3, SAP18 and SAP30 to form the SIN3 HDAC complex. Component of the nucleosome remodeling and deacetylase (NuRD) repressor complex, composed of core proteins MTA1, MTA2, MTA3, RBBP4, RBBP7, HDAC1, HDAC2, MBD2, MBD3, and peripherally associated proteins CDK2AP1, CDK2AP2, GATAD2A, GATAD2B, CHD3, CHD4 and CHD5. The exact stoichiometry of the NuRD complex is unknown, and some subunits such as MBD2 and MBD3, GATAD2A and GATAD2B, and CHD3, CHD4 and CHD5 define mutually exclusive NuRD complexes. Component of a RCOR/GFI/KDM1A/HDAC complex. Component of a BHC histone deacetylase complex that contains HDAC1, HDAC2, HMG20B, KDM1A, RCOR1 and PHF21A. The BHC complex may also contain ZMYM2, ZNF217, ZMYM3, GSE1 and GTF2I. Part of a complex containing the core histones H2A, H2B, H3 and H4, DEK and unphosphorylated DAXX. Part of a complex containing ATR and CHD4. Forms a heterologous complex at least with YY1. Interacts in the late S-phase of DNA-replication with DNMT1 in the other transcriptional repressor complex composed of DNMT1, DMAP1, PCNA, CAF1. Component of a mSin3A corepressor complex that contains SIN3A, SAP130, SUDS3, ARID4B, HDAC1 and HDAC2. Part of a complex composed of TRIM28, HDAC1, HDAC2 and EHMT2. Part of a complex containing at least CDYL, MIER1, MIER2, HDAC1 and HDAC2. Component of a histone deacetylase complex containing DNTTIP1, ZNF541, HDAC1 and HDAC2. Forms a complex comprising APPL1, RUVBL2, APPL2, CTNNB1 and HDAC1. Interacts directly with GFI1. Interacts directly with GFI1B. Interacts with APEX1; the interaction is not dependent on the acetylated status of APEX1. Interacts with ATR. Interacts with BCL6 (non-acetylated form). Interacts with BEND3. Interacts with CBFA2T3. Interacts with CDK2AP1. Interacts with CHD4. Interacts with CHD5. Interacts with CHFR. Interacts with CRY1. Interacts with DNMT1. Interacts with GATAD2A. Interacts with HCFC1. Interacts with HDAC7. Interacts with HDAC10. Interacts with INSM1. Interacts with KDM4A. Interacts with MACROH2A1 (via the non-histone region). Interacts with MBD3L2. Interacts with MTA1, with a preference for sumoylated MTA1. Interacts with NACC2. Interacts with NRIP1. Interacts with PELP1. Interacts with PIMREG. Interacts with PRDM6. Interacts with PWWP2B Interacts with SAP30. Interacts with SAP30L. Interacts with SETDB1. Interacts with SIX3. Interacts with SMARCAD1. Interacts with SNW1. Interacts with SPHK2. Interacts with SPEN/MINT. Interacts (CK2 phosphorylated form) with SP3. Interacts with SUV39H1. Interacts with TSHZ3 (via its N-terminus). Interacts with ZMYND8. Interacts with ZNF431. Interacts with ZNF263; recruited to the SIX3 promoter along with other proteins involved in chromatin modification and transcriptional corepression where it contributes to transcriptional repression. Identified in a complex with HDAC1, KCTD19, DNTTIP1 and ZNF541. Component of the SIN3B complex, which includes SIN3B, HDAC2, PHF12 and MORF4L1; interacts directly with all subunits. Requires Zn(2+) as cofactor. The cofactor is Ca(2+). S-nitrosylated by GAPDH. In neurons, S-nitrosylation at Cys-262 and Cys-274 does not affect enzyme activity, but induces HDAC2 release from chromatin. This in turn increases acetylation of histones surrounding neurotrophin-dependent gene promoters and promotes their transcription. In embryonic cortical neurons, S-Nitrosylation regulates dendritic growth and branching.

It is found in the nucleus. The protein resides in the cytoplasm. The enzyme catalyses N(6)-acetyl-L-lysyl-[histone] + H2O = L-lysyl-[histone] + acetate. It catalyses the reaction N(6)-acetyl-L-lysyl-[protein] + H2O = L-lysyl-[protein] + acetate. It carries out the reaction N(6)-(2E)-butenoyl-L-lysyl-[protein] + H2O = (2E)-2-butenoate + L-lysyl-[protein]. The catalysed reaction is N(6)-(2-hydroxyisobutanoyl)-L-lysyl-[protein] + H2O = 2-hydroxy-2-methylpropanoate + L-lysyl-[protein]. The enzyme catalyses N(6)-[(S)-lactoyl]-L-lysyl-[protein] + H2O = (S)-lactate + L-lysyl-[protein]. Inositol tetraphosphate (1D-myo-inositol 1,4,5,6-tetrakisphosphate) may act as an intermolecular glue between HDAC2 and N-Cor repressor complex components. Its function is as follows. Histone deacetylase that catalyzes the deacetylation of lysine residues on the N-terminal part of the core histones (H2A, H2B, H3 and H4). Histone deacetylation gives a tag for epigenetic repression and plays an important role in transcriptional regulation, cell cycle progression and developmental events. Histone deacetylases act via the formation of large multiprotein complexes. Forms transcriptional repressor complexes by associating with MAD, SIN3, YY1 and N-COR. Component of a RCOR/GFI/KDM1A/HDAC complex that suppresses, via histone deacetylase (HDAC) recruitment, a number of genes implicated in multilineage blood cell development. Acts as a component of the histone deacetylase NuRD complex which participates in the remodeling of chromatin. Component of the SIN3B complex that represses transcription and counteracts the histone acetyltransferase activity of EP300 through the recognition H3K27ac marks by PHF12 and the activity of the histone deacetylase HDAC2. Also deacetylates non-histone targets: deacetylates TSHZ3, thereby regulating its transcriptional repressor activity. May be involved in the transcriptional repression of circadian target genes, such as PER1, mediated by CRY1 through histone deacetylation. Involved in MTA1-mediated transcriptional corepression of TFF1 and CDKN1A. In addition to protein deacetylase activity, also acts as a protein-lysine deacylase by recognizing other acyl groups: catalyzes removal of (2E)-butenoyl (crotonyl), lactoyl (lactyl) and 2-hydroxyisobutanoyl (2-hydroxyisobutyryl) acyl groups from lysine residues, leading to protein decrotonylation, delactylation and de-2-hydroxyisobutyrylation, respectively. In Mus musculus (Mouse), this protein is Histone deacetylase 2.